A 609-amino-acid polypeptide reads, in one-letter code: (R)-linalool synthase TPS5, chloroplastic (609 aa).

The transit peptide at 1 to 42 (MVSILSNIGMMVVTFKRPSLFTSLRRRSANNIIITKHSHPIS) directs the protein to the chloroplast. The (2E)-geranyl diphosphate site is built by Arg325, Asp362, Asp366, Arg503, and Asp506. 2 residues coordinate Mg(2+): Asp362 and Asp366. Residues 362 to 366 (DDIYD) carry the DDXXD motif motif. Asp506, Thr510, and Glu514 together coordinate Mg(2+).

The protein belongs to the terpene synthase family. Tpsb subfamily. Requires Mg(2+) as cofactor. The cofactor is Mn(2+). In terms of tissue distribution, highly expressed in young fruits and plant tops. Expressed in flower buds and trichomes of petioles and stems. Expressed at low levels in young leaves, stems, petioles, sepals and petals.

It localises to the plastid. Its subcellular location is the chloroplast. The catalysed reaction is (2E)-geranyl diphosphate + H2O = (R)-linalool + diphosphate. It catalyses the reaction (2E,6E)-farnesyl diphosphate + H2O = (6E)-nerolidol + diphosphate. Its pathway is secondary metabolite biosynthesis; terpenoid biosynthesis. Functionally, involved in monoterpene (C10) biosynthesis in glandular trichomes. Converts geranyl diphosphate to linalool in glandular trichomes in response to jasmonate (JA). Can convert farnesyl diphosphate to nerolidol in vitro. This chain is (R)-linalool synthase TPS5, chloroplastic, found in Solanum lycopersicum (Tomato).